Here is a 282-residue protein sequence, read N- to C-terminus: Phosphate import ATP-binding protein PstB (282 aa).

The span at 1-10 shows a compositional bias: basic and acidic residues; that stretch reads MNMAESHLDP. Positions 1–24 are disordered; the sequence is MNMAESHLDPSKLATGPAGAGAAT. Positions 14–24 are enriched in low complexity; sequence ATGPAGAGAAT. Residues 36–277 enclose the ABC transporter domain; it reads IEVKNLNFFY…PARKETEDYI (242 aa). Residue 68-75 coordinates ATP; it reads GPSGCGKS.

The protein belongs to the ABC transporter superfamily. Phosphate importer (TC 3.A.1.7) family. The complex is composed of two ATP-binding proteins (PstB), two transmembrane proteins (PstC and PstA) and a solute-binding protein (PstS).

Its subcellular location is the cell inner membrane. The catalysed reaction is phosphate(out) + ATP + H2O = ADP + 2 phosphate(in) + H(+). Part of the ABC transporter complex PstSACB involved in phosphate import. Responsible for energy coupling to the transport system. In Burkholderia thailandensis (strain ATCC 700388 / DSM 13276 / CCUG 48851 / CIP 106301 / E264), this protein is Phosphate import ATP-binding protein PstB.